The following is a 129-amino-acid chain: Large ribosomal subunit protein bL12c (129 aa).

It belongs to the bacterial ribosomal protein bL12 family. As to quaternary structure, homodimer. Part of the ribosomal stalk of the 50S ribosomal subunit. Forms a multimeric L10(L12)X complex, where L10 forms an elongated spine to which 2 to 4 L12 dimers bind in a sequential fashion. Binds GTP-bound translation factors.

The protein localises to the plastid. Its subcellular location is the chloroplast. Its function is as follows. Forms part of the ribosomal stalk which helps the ribosome interact with GTP-bound translation factors. Is thus essential for accurate translation. This is Large ribosomal subunit protein bL12c from Oltmannsiellopsis viridis (Marine flagellate).